The following is a 226-amino-acid chain: N-(5'-phosphoribosyl)anthranilate isomerase 2 (226 aa).

The protein belongs to the TrpF family.

The enzyme catalyses N-(5-phospho-beta-D-ribosyl)anthranilate = 1-(2-carboxyphenylamino)-1-deoxy-D-ribulose 5-phosphate. It functions in the pathway amino-acid biosynthesis; L-tryptophan biosynthesis; L-tryptophan from chorismate: step 3/5. The sequence is that of N-(5'-phosphoribosyl)anthranilate isomerase 2 (trpF2) from Methanosarcina mazei (strain ATCC BAA-159 / DSM 3647 / Goe1 / Go1 / JCM 11833 / OCM 88) (Methanosarcina frisia).